Here is a 340-residue protein sequence, read N- to C-terminus: Glycerol-3-phosphate dehydrogenase [NAD(P)+] (340 aa).

NADPH-binding residues include S14, F15, R35, and K108. Positions 108 and 136 each coordinate sn-glycerol 3-phosphate. A140 serves as a coordination point for NADPH. Positions 191, 244, 254, 255, and 256 each coordinate sn-glycerol 3-phosphate. Catalysis depends on K191, which acts as the Proton acceptor. Residue R255 participates in NADPH binding. E281 is an NADPH binding site.

It belongs to the NAD-dependent glycerol-3-phosphate dehydrogenase family.

It localises to the cytoplasm. The enzyme catalyses sn-glycerol 3-phosphate + NAD(+) = dihydroxyacetone phosphate + NADH + H(+). It carries out the reaction sn-glycerol 3-phosphate + NADP(+) = dihydroxyacetone phosphate + NADPH + H(+). It functions in the pathway membrane lipid metabolism; glycerophospholipid metabolism. In terms of biological role, catalyzes the reduction of the glycolytic intermediate dihydroxyacetone phosphate (DHAP) to sn-glycerol 3-phosphate (G3P), the key precursor for phospholipid synthesis. In Pseudomonas aeruginosa (strain ATCC 15692 / DSM 22644 / CIP 104116 / JCM 14847 / LMG 12228 / 1C / PRS 101 / PAO1), this protein is Glycerol-3-phosphate dehydrogenase [NAD(P)+].